The primary structure comprises 559 residues: Leucine-rich repeat protein soc-2 (559 aa).

Basic and acidic residues predominate over residues 1 to 17 (METSKEFEFRPAKETSR). A disordered region spans residues 1-55 (METSKEFEFRPAKETSRSKSPGGIVGRLSNFARNKARHSLSEKGSNSVGGSGGAG). LRR repeat units lie at residues 74–95 (QDQRLDLSSIEITSIPSPIKEL), 97–118 (QLTELFLYKNKLTCLPTEIGQL), 120–142 (NLKKLGLSENALTSLPDSLASLE), 143–164 (SLETLDLRHNKLTEVPSVIYKI), 166–187 (SLETLWLRYNRIVAVDEQIGNL), 189–210 (KLKMLDVRENKIRELPSAIGKL), 212–233 (SLVVCLVSYNHLTRVPEEIGDC), 235–256 (SLTQLDLQHNDLSELPYSIGKL), 258–279 (NLVRIGIRYNKIRCIPSELESC), 281–302 (QLEEFIVESNHLQLLPPNLLTM), 305–326 (KIHTVNLSRNELTAFPAGGPQQ), 329–350 (STVTINMEHNQISKIPIGIFSK), 353–374 (RLTKLNLKENELVSLPLDMGSW), 376–397 (SITELNLSTNQLKVLPEDIEKL), 399–420 (NLEILVLSNNQLKKLPNQIGNL), 422–443 (KLRELDLEENELETVPTEIGFL), 445–466 (HLTKLWVQSNKILTLPRSIGNL), 468–489 (SLQDLRLGENNLTAIPEEIGHL), 491–513 (SLKSLYLNDNSSLHNLPFELALC), and 515–536 (SLEIMSIENSPLSQIPPEITAG).

Belongs to the SHOC2 family. As to quaternary structure, interacts with let-60.

Its function is as follows. Acts as a Ras effector and participates in MAPK pathway activation. Probably acts as a scaffolding protein in a protein phosphatase complex that specifically dephosphorylates Raf kinase and stimulates Raf activity at specialized signaling complexes upon Ras activation. Required for vulval development. Involved in fluid homeostasis. Plays a role in nicotinic acetylcholine receptor (nAChR)-mediated sensitivity to nicotine. The chain is Leucine-rich repeat protein soc-2 (soc-2) from Caenorhabditis elegans.